Consider the following 158-residue polypeptide: Transcription elongation factor GreA (158 aa).

Residues 53-73 adopt a coiled-coil conformation; it reads EQQSFIEGRIQEIEGKLSNAQ.

It belongs to the GreA/GreB family.

Necessary for efficient RNA polymerase transcription elongation past template-encoded arresting sites. The arresting sites in DNA have the property of trapping a certain fraction of elongating RNA polymerases that pass through, resulting in locked ternary complexes. Cleavage of the nascent transcript by cleavage factors such as GreA or GreB allows the resumption of elongation from the new 3'terminus. GreA releases sequences of 2 to 3 nucleotides. This chain is Transcription elongation factor GreA, found in Halorhodospira halophila (strain DSM 244 / SL1) (Ectothiorhodospira halophila (strain DSM 244 / SL1)).